A 356-amino-acid chain; its full sequence is Aminodeoxyfutalosine deaminase (356 aa).

Zn(2+) is bound by residues His-18 and His-20. 3 residues coordinate substrate: Arg-73, Glu-140, and Gly-172. His-199 serves as a coordination point for Zn(2+). Glu-202 serves as the catalytic Proton donor. Position 287 (Asp-287) interacts with Zn(2+).

Belongs to the metallo-dependent hydrolases superfamily. Adenosine and AMP deaminases family. Zn(2+) is required as a cofactor.

The catalysed reaction is 6-amino-6-deoxyfutalosine + H2O + H(+) = futalosine + NH4(+). Its pathway is quinol/quinone metabolism; menaquinone biosynthesis. Functionally, catalyzes the deamination of aminodeoxyfutalosine (AFL) into futalosine (FL), a step in the biosynthesis of menaquinone (MK, vitamin K2). Is very poorly efficient on 1-(6-amino-9H-purin-9-yl)-1-deoxy-N-ethyl-beta-D-ribofuranuronamide (NECA), adenosine, 5'-methylthioadenosine, 5'-deoxyadenosine, 2'-deoxyadenosine, and AMP as substrate. In Acidothermus cellulolyticus (strain ATCC 43068 / DSM 8971 / 11B), this protein is Aminodeoxyfutalosine deaminase.